Consider the following 1026-residue polypeptide: Exportin-T (1026 aa).

The protein belongs to the exportin family.

The protein localises to the nucleus. It localises to the cytoplasm. TRNA nucleus export receptor which facilitates tRNA translocation across the nuclear pore complex. Involved in pre-tRNA splicing, probably by affecting the interaction of pre-tRNA with splicing endonuclease. This is Exportin-T (los1) from Neurospora crassa (strain ATCC 24698 / 74-OR23-1A / CBS 708.71 / DSM 1257 / FGSC 987).